A 426-amino-acid chain; its full sequence is MSIVEDARKGIITEEMKVVAAQEGVTEDFIRRGIASGQIVIPVSPYRKVKLCGIGGGLRTKVNCSVGTSTDIVDVDMEVEKVKAGERAGADTIMELSTGGDFVEIRRRCIEATTLSVGSVPLYQAFIEAARKDGAVIHMREDDLFRITEEQAKLGTNFMAIHTGVNRITLERLQRQGRHGGLCSRGGAFLTAWMLHNDKENPLYAEFDYLCEILKEHEVTLSTGNGMRAGAVHDATDRAQIQELIINAELGDRAHEMGIQVIVEGPGHVPLDQIETNVRLMKRMSGNKPFYMLGPIVTDIAPGYDDRVSAIGAAMSSMHGADFICYVTPAEHLALPNPEEVYEGVISSRIAAHVGDMIKLNKRDQDLAMGHARRDLDWEAQFNLAINPARARQIRNERASADADACTMCGDYCALKIANKVIKKLD.

Residues methionine 94, tyrosine 123, histidine 162, 184–186 (SRG), 225–228 (NGMR), and glutamate 264 contribute to the substrate site. Histidine 268 serves as a coordination point for Zn(2+). Tyrosine 291 contributes to the substrate binding site. Histidine 332 provides a ligand contact to Zn(2+). Positions 406, 409, and 413 each coordinate [4Fe-4S] cluster.

This sequence belongs to the ThiC family. The cofactor is [4Fe-4S] cluster.

The catalysed reaction is 5-amino-1-(5-phospho-beta-D-ribosyl)imidazole + S-adenosyl-L-methionine = 4-amino-2-methyl-5-(phosphooxymethyl)pyrimidine + CO + 5'-deoxyadenosine + formate + L-methionine + 3 H(+). It functions in the pathway cofactor biosynthesis; thiamine diphosphate biosynthesis. Catalyzes the synthesis of the hydroxymethylpyrimidine phosphate (HMP-P) moiety of thiamine from aminoimidazole ribotide (AIR) in a radical S-adenosyl-L-methionine (SAM)-dependent reaction. This chain is Phosphomethylpyrimidine synthase, found in Methanospirillum hungatei JF-1 (strain ATCC 27890 / DSM 864 / NBRC 100397 / JF-1).